We begin with the raw amino-acid sequence, 429 residues long: D-amino acid dehydrogenase (429 aa).

3 to 17 (VLILGSGVIGTTTAW) is an FAD binding site.

It belongs to the DadA oxidoreductase family. The cofactor is FAD.

The catalysed reaction is a D-alpha-amino acid + A + H2O = a 2-oxocarboxylate + AH2 + NH4(+). It functions in the pathway amino-acid degradation; D-alanine degradation; NH(3) and pyruvate from D-alanine: step 1/1. In terms of biological role, oxidative deamination of D-amino acids. The polypeptide is D-amino acid dehydrogenase (Xanthomonas campestris pv. campestris (strain 8004)).